The primary structure comprises 626 residues: MHKQTLSFQAEVAQLLNLVTHSLYSNPDIFLRELISNASDACDKLRFEALNDAALYEGDSELQVRLRYNKTANTLTITDNGIGLSEREAIENLGTIAKSGTRDFMAKLSGDQKNDAQLIGQFGVGFYSGFIVADRITVESRRAGLPATQGVRWSSEGTGEFEVSEMERAERGTSIILHLKDDARDYLNAWKLKGIINKYSDHISLPILMQKEEWKEGENGQPGEMVVTGEWETVNQAAALWTRAKKDITPEQYDEFYKQISYDSQAPLATTHNRVEGGTEYTQLLFIPAKAPMDLFNRDKAAGVKLYVRRVFIMDDAQALMPTYLRFVKGVVDSADLPLNVSRELLQESRAVKAIREGNTRRVLSMIEDLAANDADKFKAFYAEFGAVLKEGLGEDFANRERLAKLLRFASSTTDTVSVGFADYKARMKEGQDAIYYVTADTLAAAKSSPQLEIFRKKGIEVLLMADRVDEWALNYLHEFDGTPLQSVAKGAVDLGKLQDEDEKKAAEEAQTHFKPILDKLKEALKDKAKDVRATTRLVDSPACLVVQDGDMSTQLARMLKQAGQAVPEVKPILEVNAQHPLVKKLEAGEHFDDLAHILFDQALLAEGGMPEDPAAYVKRVNALLV.

The tract at residues 1–343 (MHKQTLSFQA…SADLPLNVSR (343 aa)) is a; substrate-binding. Residues 344-558 (ELLQESRAVK…DGDMSTQLAR (215 aa)) are b. The interval 559 to 626 (MLKQAGQAVP…YVKRVNALLV (68 aa)) is c.

This sequence belongs to the heat shock protein 90 family. Homodimer.

The protein localises to the cytoplasm. Its function is as follows. Molecular chaperone. Has ATPase activity. This Polaromonas sp. (strain JS666 / ATCC BAA-500) protein is Chaperone protein HtpG.